The primary structure comprises 1707 residues: Latrophilin Cirl (1707 aa).

Over 1 to 767 (MLPTILSISY…LFTMFDGNMR (767 aa)) the chain is Extracellular. An SUEL-type lectin domain is found at 25–114 (ACEGKKLTIE…KYLEAHYQCI (90 aa)). A glycan (N-linked (GlcNAc...) asparagine) is linked at Asn142. Residues 176–301 (GLFNVPPQHT…TAASGAVVPG (126 aa)) form a disordered region. Polar residues-rich tracts occupy residues 185–198 (TAVT…STTA) and 256–265 (NATSPSNTRI). Asn256 carries N-linked (GlcNAc...) asparagine glycosylation. Over residues 275–285 (DDGTLLTTKSS) the composition is skewed to low complexity. Residues Asn302, Asn341, Asn398, Asn655, Asn703, and Asn730 are each glycosylated (N-linked (GlcNAc...) asparagine). The interval 376–400 (YDEYDDDPSSTTPAPNGGDCLHNSS) is disordered. Positions 561-754 (RSVVQKVKNI…AILMDVVDEH (194 aa)) constitute a GAIN-B domain. Disulfide bonds link Cys709–Cys736 and Cys724–Cys738. The tract at residues 709-754 (CVFWNYIDHAWSANGCSLESTNRTHSVCSCNHLTNFAILMDVVDEH) is GPS. The helical transmembrane segment at 768–788 (IFIYISIGICVVFIVIALLTL) threads the bilayer. Topologically, residues 789 to 801 (KLFNGVFVKSART) are cytoplasmic. The helical transmembrane segment at 802 to 822 (SIYTSIYLCLLAIELLFLLGI) threads the bilayer. Over 823 to 828 (EQTETS) the chain is Extracellular. A helical transmembrane segment spans residues 829-849 (IFCGFITIFLHCAILSGTAWF). Over 850-875 (CYEAFHSYSTLTSDELLLEVDQTPKV) the chain is Cytoplasmic. The helical transmembrane segment at 876–896 (NCYYLLSYGLSLSVVAISLVI) threads the bilayer. Over 897 to 920 (DPSTYTQNDYCVLMEANALFYATF) the chain is Extracellular. Residues 921–941 (VIPVLVFFVAAIGYTFLSWII) form a helical membrane-spanning segment. The Cytoplasmic segment spans residues 942–968 (LCRKSRTGLKTKEHTRLASVRFDIRCS). A helical membrane pass occupies residues 969 to 989 (FVFLLLLSAVWCSSYFYLRGA). Residues 990 to 999 (KMDDDTADVY) are Extracellular-facing. A helical transmembrane segment spans residues 1000–1020 (GYCFICFNTLLGLYIFVFHCI). Residues 1021–1707 (QNEKIRREYR…VRCYLEPLAK (687 aa)) are Cytoplasmic-facing. Ser1156 carries the phosphoserine modification. Disordered regions lie at residues 1169 to 1188 (AHKQ…GEGY) and 1236 to 1260 (KPNS…SGSL). Low complexity predominate over residues 1172–1181 (QQQQQQQQQQ). Ser1255 and Ser1262 each carry phosphoserine. Residues 1316–1326 (QQLHQQQQQQL) are compositionally biased toward low complexity. 4 disordered regions span residues 1316–1335 (QQLH…QVEQ), 1450–1538 (GGGS…SDER), 1563–1582 (APLD…EHNG), and 1612–1687 (GGRL…QQRH). Ser1327 and Ser1328 each carry phosphoserine. Positions 1456 to 1481 (GGSVSSRSQQQQLKKQQQQQSLAQQR) are enriched in low complexity. Composition is skewed to acidic residues over residues 1489–1503 (DDDD…EEAT) and 1513–1526 (CDED…DLED). The segment covering 1635-1650 (QTPAQKRQQLQKLSPQ) has biased composition (polar residues). The span at 1651–1673 (STTSSSSHTSHSNPNPHPLQLTH) shows a compositional bias: low complexity. The span at 1674 to 1686 (PHPHQHPPHHQQR) shows a compositional bias: basic residues.

Belongs to the G-protein coupled receptor 2 family. LN-TM7 subfamily. As to quaternary structure, forms a heterodimer, consisting of a large extracellular region non-covalently linked to a seven-transmembrane moiety. Proteolytically cleaved into 2 subunits, an extracellular subunit and a seven-transmembrane subunit.

It localises to the cell membrane. The sequence is that of Latrophilin Cirl from Drosophila yakuba (Fruit fly).